Consider the following 153-residue polypeptide: Adenosine 5'-monophosphoramidase HINT3 (153 aa).

Positions 20-130 constitute an HIT domain; it reads IFCRIANKQE…PASQLGFLSR (111 aa). AMP contacts are provided by residues 46 to 47 and 115 to 117; these read DI and HLH. A Histidine triad motif motif is present at residues 113-117; the sequence is HLHLH. His-115 acts as the Tele-AMP-histidine intermediate in catalysis.

The protein belongs to the HINT family. In terms of assembly, forms dimers to octamers and even larger oligomer.

It localises to the cytoplasm. The protein resides in the nucleus. It carries out the reaction adenosine 5'-phosphoramidate + H2O = AMP + NH4(+). In terms of biological role, exhibits adenosine 5'-monophosphoramidase activity, hydrolyzing purine nucleotide phosphoramidates with a single phosphate group such as adenosine 5'monophosphoramidate (AMP-NH2) to yield AMP and NH2. Hydrolyzes lysyl-AMP (AMP-N-epsilon-(N-alpha-acetyl lysine methyl ester)) generated by lysine tRNA ligase. The protein is Adenosine 5'-monophosphoramidase HINT3 (hint3) of Xenopus tropicalis (Western clawed frog).